Reading from the N-terminus, the 107-residue chain is C-X-C motif chemokine 2 (107 aa).

A signal peptide spans 1–34 (MARATLSAAPSNPRLLRVALLLLLLVAASRRAAG). Disulfide bonds link cysteine 43–cysteine 69 and cysteine 45–cysteine 85.

It belongs to the intercrine alpha (chemokine CxC) family. The N-terminal processed form GRO-beta(5-73) is produced by proteolytic cleavage after secretion from bone marrow stromal cells.

The protein resides in the secreted. Its function is as follows. Produced by activated monocytes and neutrophils and expressed at sites of inflammation. Hematoregulatory chemokine, which, in vitro, suppresses hematopoietic progenitor cell proliferation. GRO-beta(5-73) shows a highly enhanced hematopoietic activity. This chain is C-X-C motif chemokine 2 (CXCL2), found in Homo sapiens (Human).